A 332-amino-acid polypeptide reads, in one-letter code: Long form salivary protein D7L2 (332 aa).

A signal peptide spans methionine 1–alanine 21. Cystine bridges form between cysteine 40–cysteine 77 and cysteine 73–cysteine 133. Residue tryptophan 61 coordinates leukotriene E4. Residues glycine 157 and lysine 176 each coordinate leukotriene E4. 3 cysteine pairs are disulfide-bonded: cysteine 184/cysteine 219, cysteine 200/cysteine 331, and cysteine 259/cysteine 278. Glutamate 185, arginine 203, and histidine 216 together coordinate noradrenaline. Noradrenaline contacts are provided by aspartate 294 and glutamate 297.

This sequence belongs to the PBP/GOBP family. As to quaternary structure, interacts with human CD4. As to expression, saliva (at protein level). Female salivary gland (at protein level). Detected in the head and thorax of the female mosquitoes, where the salivary glands are located.

The protein localises to the secreted. Modulates blood feeding of female mosquitoes on vertebrate species by binding and sequestering different mediators involved in the host response, such as biogenic amines and eicosanoids. Binds serotonin, histamine, tryptamine, noradrenaline, leukotriene B4, leukotriene C4, leukotriene D4, leukotriene E4 and U-46619, a stable analog of thromboxane A2. Does not bind adrenaline. Exhibits vasodilating activity. Inhibits agonist-induced platelet aggregation but not blood clotting. Its function is as follows. (Microbial infection) Probably promotes Plasmodium gallinaceum oocyst development in mosquito midgut. This chain is Long form salivary protein D7L2, found in Aedes aegypti (Yellowfever mosquito).